The sequence spans 550 residues: Arginine--tRNA ligase (550 aa).

Positions 122–132 (GNPTGPLHLAH) match the 'HIGH' region motif.

The protein belongs to the class-I aminoacyl-tRNA synthetase family. In terms of assembly, monomer.

It localises to the cytoplasm. The enzyme catalyses tRNA(Arg) + L-arginine + ATP = L-arginyl-tRNA(Arg) + AMP + diphosphate. The polypeptide is Arginine--tRNA ligase (Tropheryma whipplei (strain TW08/27) (Whipple's bacillus)).